We begin with the raw amino-acid sequence, 58 residues long: Preprotein translocase subunit SecG (58 aa).

The Cytoplasmic portion of the chain corresponds to 1-33 (MARRKKYEGLNPFVAAGLIKFSEEGEMERIKLS). The helical transmembrane segment at 34–55 (PKAAIAVSAAIIAALIIINLLL) threads the bilayer. Residues 56–58 (PPL) lie on the Extracellular side of the membrane.

It belongs to the SEC61-beta family. In terms of assembly, component of the protein translocase complex. Heterotrimer consisting of alpha (SecY), beta (SecG) and gamma (SecE) subunits. Can form oligomers of the heterotrimer.

The protein resides in the cell membrane. In terms of biological role, involved in protein export. The function of the beta subunit is unknown, but it may be involved in stabilization of the trimeric complex. The chain is Preprotein translocase subunit SecG from Pyrobaculum arsenaticum (strain DSM 13514 / JCM 11321 / PZ6).